A 336-amino-acid chain; its full sequence is 3-isopropylmalate dehydrogenase (336 aa).

The substrate site is built by Arg87, Arg97, Arg121, and Asp211. Positions 211, 235, and 239 each coordinate Mg(2+). 271–283 (GSAPDIAGQGIAD) provides a ligand contact to NAD(+).

The protein belongs to the isocitrate and isopropylmalate dehydrogenases family. LeuB type 2 subfamily. Homodimer. It depends on Mg(2+) as a cofactor. The cofactor is Mn(2+).

It localises to the cytoplasm. It carries out the reaction (2R,3S)-3-isopropylmalate + NAD(+) = 4-methyl-2-oxopentanoate + CO2 + NADH. It participates in amino-acid biosynthesis; L-leucine biosynthesis; L-leucine from 3-methyl-2-oxobutanoate: step 3/4. Functionally, catalyzes the oxidation of 3-carboxy-2-hydroxy-4-methylpentanoate (3-isopropylmalate) to 3-carboxy-4-methyl-2-oxopentanoate. The product decarboxylates to 4-methyl-2 oxopentanoate. This Rhodococcus opacus (strain B4) protein is 3-isopropylmalate dehydrogenase.